The chain runs to 934 residues: Aconitate hydratase A (934 aa).

Residues 398–454 (EPVDESLPAKRMDSEGAVQKEGEDVAGYNSSRAGHGESAAEGAAGRQSNPVVVSSPN) form a disordered region. The span at 404–420 (LPAKRMDSEGAVQKEGE) shows a compositional bias: basic and acidic residues. The segment covering 427 to 445 (SSRAGHGESAAEGAAGRQS) has biased composition (low complexity). [4Fe-4S] cluster is bound by residues C473, C539, and C542.

The protein belongs to the aconitase/IPM isomerase family. As to quaternary structure, monomer. The cofactor is [4Fe-4S] cluster.

It carries out the reaction citrate = D-threo-isocitrate. The enzyme catalyses (2S,3R)-3-hydroxybutane-1,2,3-tricarboxylate = 2-methyl-cis-aconitate + H2O. It functions in the pathway carbohydrate metabolism; tricarboxylic acid cycle; isocitrate from oxaloacetate: step 2/2. It participates in organic acid metabolism; propanoate degradation. Involved in the catabolism of short chain fatty acids (SCFA) via the tricarboxylic acid (TCA)(acetyl degradation route) and probably via the 2-methylcitrate cycle I (propionate degradation route). Catalyzes the reversible isomerization of citrate to isocitrate via cis-aconitate. Could catalyze the hydration of 2-methyl-cis-aconitate to yield (2R,3S)-2-methylisocitrate. The apo form of AcnA functions as a RNA-binding regulatory protein. This Corynebacterium diphtheriae (strain ATCC 700971 / NCTC 13129 / Biotype gravis) protein is Aconitate hydratase A (acn).